The sequence spans 476 residues: Sensor protein CzcS (476 aa).

The signal sequence occupies residues 1–35 (MRPGTSITPLSLTRRLGLFFALVLSIALASMGAFA). Over 37–158 (YSLAAQLEAR…DRKQVTARFR (122 aa)) the chain is Periplasmic. A helical membrane pass occupies residues 159–179 (TTLVLGTTVGVILTALVGAAI). The Cytoplasmic portion of the chain corresponds to 180 to 476 (TRRELEPAHV…RPSQDRPVVG (297 aa)). In terms of domain architecture, HAMP spans 181 to 234 (RRELEPAHVLIKQINRISVERLSYRVDMPPKPTEVRDIASAFNAMLQRLEDGYQ). Positions 242 to 455 (DLAHDLRTPL…TRFTLRFPLN (214 aa)) constitute a Histidine kinase domain. Histidine 245 carries the post-translational modification Phosphohistidine; by autocatalysis.

Its subcellular location is the cell inner membrane. It catalyses the reaction ATP + protein L-histidine = ADP + protein N-phospho-L-histidine.. Member of the two-component regulatory system CzcS/CzcR involved in the control of cobalt, zinc and cadmium homeostasis. Probably activates CzcR by phosphorylation. The chain is Sensor protein CzcS (czcS) from Cupriavidus metallidurans (strain ATCC 43123 / DSM 2839 / NBRC 102507 / CH34) (Ralstonia metallidurans).